A 209-amino-acid polypeptide reads, in one-letter code: Large ribosomal subunit protein uL4 (209 aa).

Positions 44–77 (QRQGTHKSKERSEVSGSTRKLIRQKGGGGARRGD) are disordered.

It belongs to the universal ribosomal protein uL4 family. As to quaternary structure, part of the 50S ribosomal subunit.

One of the primary rRNA binding proteins, this protein initially binds near the 5'-end of the 23S rRNA. It is important during the early stages of 50S assembly. It makes multiple contacts with different domains of the 23S rRNA in the assembled 50S subunit and ribosome. Its function is as follows. Forms part of the polypeptide exit tunnel. The polypeptide is Large ribosomal subunit protein uL4 (Parabacteroides distasonis (strain ATCC 8503 / DSM 20701 / CIP 104284 / JCM 5825 / NCTC 11152)).